The following is a 307-amino-acid chain: 2-methoxy-6-polyprenyl-1,4-benzoquinol methylase, mitochondrial (307 aa).

The transit peptide at Met-1–Leu-19 directs the protein to the mitochondrion. S-adenosyl-L-methionine contacts are provided by residues Ser-122, Asp-148, Asn-179 to Gly-180, and Ser-197.

This sequence belongs to the class I-like SAM-binding methyltransferase superfamily. MenG/UbiE family. As to quaternary structure, component of a multi-subunit COQ enzyme complex, composed of at least COQ3, COQ4, COQ5, COQ6, COQ7 and COQ9. Interacts with COQ3.

The protein localises to the mitochondrion inner membrane. The enzyme catalyses 2-methoxy-6-(all-trans-hexaprenyl)benzene-1,4-diol + S-adenosyl-L-methionine = 5-methoxy-2-methyl-3-(all-trans-hexaprenyl)benzene-1,4-diol + S-adenosyl-L-homocysteine + H(+). Its pathway is cofactor biosynthesis; ubiquinone biosynthesis. In terms of biological role, methyltransferase required for the conversion of 2-hexaprenyl-6-methoxy-1,4-benzoquinol (DDMQH2) to 2-hexaprenyl-3-methyl-6-methoxy-1,4-benzoquinol (DMQH2). This is 2-methoxy-6-polyprenyl-1,4-benzoquinol methylase, mitochondrial from Saccharomyces cerevisiae (strain ATCC 204508 / S288c) (Baker's yeast).